Here is a 486-residue protein sequence, read N- to C-terminus: Cobyric acid synthase (486 aa).

The GATase cobBQ-type domain occupies 248–439 (VLRIVVPALP…LHGLFDTPHA (192 aa)). The active-site Nucleophile is the Cys328. Residue His431 is part of the active site.

This sequence belongs to the CobB/CobQ family. CobQ subfamily.

It functions in the pathway cofactor biosynthesis; adenosylcobalamin biosynthesis. Catalyzes amidations at positions B, D, E, and G on adenosylcobyrinic A,C-diamide. NH(2) groups are provided by glutamine, and one molecule of ATP is hydrogenolyzed for each amidation. This Burkholderia mallei (strain ATCC 23344) protein is Cobyric acid synthase.